The following is a 325-amino-acid chain: 5-dehydro-2-deoxygluconokinase (325 aa).

It belongs to the carbohydrate kinase PfkB family.

It catalyses the reaction 5-dehydro-2-deoxy-D-gluconate + ATP = 6-phospho-5-dehydro-2-deoxy-D-gluconate + ADP + H(+). It participates in polyol metabolism; myo-inositol degradation into acetyl-CoA; acetyl-CoA from myo-inositol: step 5/7. Its function is as follows. Catalyzes the phosphorylation of 5-dehydro-2-deoxy-D-gluconate (2-deoxy-5-keto-D-gluconate or DKG) to 6-phospho-5-dehydro-2-deoxy-D-gluconate (DKGP). The chain is 5-dehydro-2-deoxygluconokinase from Listeria monocytogenes serotype 4b (strain CLIP80459).